A 190-amino-acid polypeptide reads, in one-letter code: MSKYMGGKEASSVLGVHQRTLYQWDKKGWIKTIRTKGGKRLYDVGSYLADKDEESKEDHKLSICYVRVSSNNQKDDLERQIKFMKKKYPNHTIIKDISSGINMNRKGLNKIIDLAIEGRVKEVVVAYKDRLARFGFSLIERLIEKYSDGKIVVVRKKENQEPQEELMEDMMDVMNVFIARRNGLKKYSNK.

A DNA-binding region (H-T-H motif) is located at residues 11–30 (SSVLGVHQRTLYQWDKKGWI). Residues 61-190 (LSICYVRVSS…RNGLKKYSNK (130 aa)) form the Resolvase/invertase-type recombinase catalytic domain. Positions 66-92 (VRVSSNNQKDDLERQIKFMKKKYPNHT) form a coiled coil. Ser-69 serves as the catalytic O-(5'-phospho-DNA)-serine intermediate.

It belongs to the site-specific recombinase resolvase family.

Its function is as follows. Resolvase catalyzes the resolution (a site-specific recombination) of the cointegrated replicon to yield the final transposition products. This chain is Putative resolvase R771, found in Acanthamoeba polyphaga (Amoeba).